Consider the following 175-residue polypeptide: E1B protein, small T-antigen (175 aa).

Residues 153–175 (LAEEDEDEEGTTLTTEAEQESSA) form a disordered region.

The protein belongs to the adenoviridae E1B 19 kDa protein family.

This Mus musculus (Mouse) protein is E1B protein, small T-antigen.